Reading from the N-terminus, the 632-residue chain is ATP-dependent DNA helicase RecQ (632 aa).

A Helicase ATP-binding domain is found at 47–215 (IDATLMGKDS…LRHLNLQSPH (169 aa)). 60-67 (MATGNGKS) is an ATP binding site. The short motif at 159–162 (DEAH) is the DEAH box element. In terms of domain architecture, Helicase C-terminal spans 236–385 (PMEQLCRFVL…IEALKLQAIG (150 aa)). Zn(2+)-binding residues include Cys-393, Cys-410, Cys-413, and Cys-416. In terms of domain architecture, HRDC spans 544–624 (AQYDKDLFAR…QQHKKVLTQH (81 aa)).

It belongs to the helicase family. RecQ subfamily. The cofactor is Mg(2+). It depends on Zn(2+) as a cofactor.

The enzyme catalyses Couples ATP hydrolysis with the unwinding of duplex DNA by translocating in the 3'-5' direction.. The catalysed reaction is ATP + H2O = ADP + phosphate + H(+). An ATP-dependent DNA helicase which unwinds DNA in a 3'-5' direction. Plays a role in recombination. The chain is ATP-dependent DNA helicase RecQ from Pasteurella multocida (strain Pm70).